A 352-amino-acid polypeptide reads, in one-letter code: C5a anaphylatoxin chemotactic receptor 1 (352 aa).

Residues 1–11 are compositionally biased toward polar residues; sequence MDPISNDSSEI. The tract at residues 1–20 is disordered; that stretch reads MDPISNDSSEITYDYSDGTP. At 1–38 the chain is on the extracellular side; that stretch reads MDPISNDSSEITYDYSDGTPNPDMPADGVYIPKMEPGD. N-linked (GlcNAc...) asparagine glycosylation is present at N6. Residues Y13 and Y15 each carry the sulfotyrosine modification. Residues 39 to 65 traverse the membrane as a helical segment; the sequence is IAALIIYLAVFLVGVTGNALVVWVTAF. Residues 66 to 70 lie on the Cytoplasmic side of the membrane; the sequence is EAKRT. The helical transmembrane segment at 71–94 threads the bilayer; it reads VNAIWFLNLAVADLLSCLALPILF. At 95–111 the chain is on the extracellular side; the sequence is TSIVKHNHWPFGDQACI. A disulfide bond links C110 and C189. Residues 112-133 form a helical membrane-spanning segment; it reads VLPSLILLNMYSSILLLATISA. Topologically, residues 134–154 are cytoplasmic; sequence DRFLLVFKPIWCQKFRRPGLA. The chain crosses the membrane as a helical span at residues 155–175; that stretch reads WMACGVTWVLALLLTIPSFVF. Topologically, residues 176–202 are extracellular; that stretch reads RRIHKDPYSDSILCNIDYSKGPFFIEK. The chain crosses the membrane as a helical span at residues 203–228; sequence AIAILRLMVGFVLPLLTLNICYTFLL. Residues 229–244 are Cytoplasmic-facing; it reads IRTWSRKATRSTKTLK. A helical membrane pass occupies residues 245–267; that stretch reads VVMAVVTCFFVFWLPYQVTGVIL. At 268–284 the chain is on the extracellular side; sequence AWLPRSSSTFQSVERLN. The helical transmembrane segment at 285 to 305 threads the bilayer; sequence SLCVSLAYINCCVNPIIYVMA. The Cytoplasmic portion of the chain corresponds to 306–352; that stretch reads GQGFHGRLRRSLPSIIRNVLSEDSLGRDSKSFTRSTMDTSTQKSQAV. Residues S316, S319, S326, S329, S334, S336, and S340 each carry the phosphoserine modification. Residues 332–352 are disordered; the sequence is RDSKSFTRSTMDTSTQKSQAV. Positions 337 to 352 are enriched in polar residues; that stretch reads FTRSTMDTSTQKSQAV.

It belongs to the G-protein coupled receptor 1 family. Homodimer. May also form higher-order oligomers. Interacts (when phosphorylated) with ARRB1 and ARRB2; the interaction is associated with internalization of C5aR. In terms of processing, sulfation plays a critical role in the association of C5aR with C5a, but no significant role in the ability of the receptor to transduce a signal and mobilize calcium in response to a small peptide agonist. Phosphorylated on serine residues in response to C5a binding, resulting in internalization of the receptor and short-term desensitization to the ligand.

The protein resides in the cell membrane. It is found in the cytoplasmic vesicle. Its function is as follows. Receptor for the chemotactic and inflammatory peptide anaphylatoxin C5a. The ligand interacts with at least two sites on the receptor: a high-affinity site on the extracellular N-terminus, and a second site in the transmembrane region which activates downstream signaling events. Receptor activation stimulates chemotaxis, granule enzyme release, intracellular calcium release and superoxide anion production. The sequence is that of C5a anaphylatoxin chemotactic receptor 1 (C5ar1) from Rattus norvegicus (Rat).